Reading from the N-terminus, the 240-residue chain is Regulatory protein RecX (240 aa).

Belongs to the RecX family.

The protein resides in the cytoplasm. Functionally, modulates RecA activity. This chain is Regulatory protein RecX, found in Lacticaseibacillus paracasei (strain ATCC 334 / BCRC 17002 / CCUG 31169 / CIP 107868 / KCTC 3260 / NRRL B-441) (Lactobacillus paracasei).